The primary structure comprises 132 residues: uncharacterized protein (132 aa).

Residues 1-35 (MSFEYRHYKREAKICTCRGGWAHVLLCIGVSQGAC) form the signal peptide. The interval 91 to 132 (AHPGSHSDQPPGVPSRRKSRLERWSPSVSRSTSPPTEAPFCL) is disordered. Residues 115–125 (SPSVSRSTSPP) are compositionally biased toward low complexity.

Its subcellular location is the secreted. This is an uncharacterized protein from Homo sapiens (Human).